A 393-amino-acid chain; its full sequence is MDENESNQSLMTSSQYPKEAVRKRQNSARNSGGSDSSRFSRKSFKLDYRLEEDVTKSKKGKDGRFVNPWPTWKNHSIPHVLRWLIMEKDHSSVPSSKEELDKELPVLKPYFITNPEEAGVRETGLRVTWLGHATVMVEMDELIFLTDPIFSSRASPSQYMGPKRFRRSPCTISELPPIDAVLISHNHYDHLDYNSVIALNERFGNELRWFVPLGLLDWMQKCGCENVIELDWWEENCVPGHDKVTFVFTPSQHWCKRTLMDDNKVLWGSWSVLGPWNRFFFAGDTGYCPAFEEIGKRFGPFDLAAIPIGAYEPRRFMKYQHVDPEEAVRIHIDVQTKKSMAIHWGTFALANEHYLEPPVKLNEALERYGLNAEDFFVLKHGESRYLNTDDENF.

M1 carries the N-acetylmethionine modification. A compositionally biased stretch (polar residues) spans 1 to 16 (MDENESNQSLMTSSQY). The tract at residues 1–40 (MDENESNQSLMTSSQYPKEAVRKRQNSARNSGGSDSSRFS) is disordered. Zn(2+) is bound by residues H185 and H187. Residue Y188 coordinates an N-acyl-1,2-diacyl-sn-glycero-3-phosphoethanolamine. Zn(2+)-binding residues include D189, H190, and H253. 2 residues coordinate deoxycholate: K256 and M260. D284 contributes to the Zn(2+) binding site. H321 is an an N-acyl-1,2-diacyl-sn-glycero-3-phosphoethanolamine binding site. H343 is a Zn(2+) binding site. A348 contributes to the deoxycholate binding site.

Belongs to the NAPE-PLD family. As to quaternary structure, homodimer. Bile acids promote the assembly of inactive monomers into an active dimer and enable catalysis. Requires Zn(2+) as cofactor. In terms of tissue distribution, widely expressed. Highest expression in brain, kidney and testis (at protein level). Expressed in adipose tissue (at protein level).

The protein localises to the golgi apparatus membrane. The protein resides in the early endosome membrane. Its subcellular location is the nucleus envelope. It is found in the nucleus. It localises to the nucleoplasm. It carries out the reaction an N-acyl-1,2-diacyl-sn-glycero-3-phosphoethanolamine + H2O = an N-acylethanolamine + a 1,2-diacyl-sn-glycero-3-phosphate + H(+). It catalyses the reaction N-butanoyl-1-hexadecanoyl-2-(9Z,12Z-octadecadienoyl)-sn-glycero-3-phosphoethanolamine + H2O = N-butanoyl ethanolamine + 1-hexadecanoyl-2-(9Z,12Z-octadecadienoyl)-sn-glycero-3-phosphate + H(+). The enzyme catalyses N-hexanoyl-1-hexadecanoyl-2-(9Z,12Z-octadecadienoyl)-sn-glycero-3-phosphoethanolamine + H2O = N-hexanoyl ethanolamine + 1-hexadecanoyl-2-(9Z,12Z-octadecadienoyl)-sn-glycero-3-phosphate + H(+). The catalysed reaction is N-octanoyl-1-hexadecanoyl-2-(9Z,12Z-octadecadienoyl)-sn-glycero-3-phosphoethanolamine + H2O = N-octanoyl ethanolamine + 1-hexadecanoyl-2-(9Z,12Z-octadecadienoyl)-sn-glycero-3-phosphate + H(+). It carries out the reaction N-decanoyl-1-hexadecanoyl-2-(9Z,12Z-octadecadienoyl)-sn-glycero-3-phosphoethanolamine + H2O = N-decanoyl ethanolamine + 1-hexadecanoyl-2-(9Z,12Z-octadecadienoyl)-sn-glycero-3-phosphate + H(+). It catalyses the reaction N-dodecanoyl-1,2-di-(9Z-octadecenoyl)-sn-glycero-3-phosphoethanolamine + H2O = N-dodecanoylethanolamine + 1,2-di-(9Z-octadecenoyl)-sn-glycero-3-phosphate + H(+). The enzyme catalyses N-tetradecanoyl-1,2-di-(9Z-octadecenoyl)-sn-glycero-3-phosphoethanolamine + H2O = N-tetradecanoylethanolamine + 1,2-di-(9Z-octadecenoyl)-sn-glycero-3-phosphate + H(+). The catalysed reaction is N-hexadecanoyl-1,2-di-(9Z-octadecenoyl)-sn-glycero-3-phosphoethanolamine + H2O = N-hexadecanoylethanolamine + 1,2-di-(9Z-octadecenoyl)-sn-glycero-3-phosphate + H(+). It carries out the reaction N,1-dihexadecanoyl-2-(9Z,12Z-octadecadienoyl)-sn-glycero-3-phosphoethanolamine + H2O = 1-hexadecanoyl-2-(9Z,12Z-octadecadienoyl)-sn-glycero-3-phosphate + N-hexadecanoylethanolamine + H(+). It catalyses the reaction N-octadecanoyl-1,2-di-(9Z-octadecenoyl)-sn-glycero-3-phosphoethanolamine + H2O = N-octadecanoyl ethanolamine + 1,2-di-(9Z-octadecenoyl)-sn-glycero-3-phosphate + H(+). The enzyme catalyses N,1,2-tri-(9Z-octadecenoyl)-sn-glycero-3-phosphoethanolamine + H2O = N-(9Z-octadecenoyl) ethanolamine + 1,2-di-(9Z-octadecenoyl)-sn-glycero-3-phosphate + H(+). The catalysed reaction is N-(5Z,8Z,11Z,14Z-eicosatetraenoyl)-1,2-diacyl-sn-glycero-3-phosphoethanolamine + H2O = N-(5Z,8Z,11Z,14Z-eicosatetraenoyl)-ethanolamine + a 1,2-diacyl-sn-glycero-3-phosphate + H(+). It carries out the reaction N-(5Z,8Z,11Z,14Z-eicosatetraenoyl)-1,2-di-(9Z-octadecenoyl)-sn-glycero-3-phosphoethanolamine + H2O = N-(5Z,8Z,11Z,14Z-eicosatetraenoyl)-ethanolamine + 1,2-di-(9Z-octadecenoyl)-sn-glycero-3-phosphate + H(+). It catalyses the reaction 1-O-(1Z-octadecenoyl)-2-(9Z-octadecenoyl)-sn-glycero-3-phospho-N-hexadecanoyl-ethanolamine + H2O = 1-O-(1Z-octadecenoyl)-2-(9Z-octadecenoyl)-sn-glycero-3-phosphate + N-hexadecanoylethanolamine + H(+). The enzyme catalyses N,1-diacyl-sn-glycero-3-phosphoethanolamine + H2O = an N-acylethanolamine + a 1-acyl-sn-glycero-3-phosphate + H(+). The catalysed reaction is N,1-dihexadecanoyl-sn-glycero-3-phosphoethanolamine + H2O = N-hexadecanoylethanolamine + 1-hexadecanoyl-sn-glycero-3-phosphate + H(+). It carries out the reaction N-(5Z,8Z,11Z,14Z-eicosatetraenoyl)-1-(9Z-octadecenoyl)-sn-glycero-3-phosphoethanolamine + H2O = N-(5Z,8Z,11Z,14Z-eicosatetraenoyl)-ethanolamine + 1-(9Z-octadecenoyl)-sn-glycero-3-phosphate + H(+). Activated by divalent cations. Activated by bile acids. In terms of biological role, D-type phospholipase that hydrolyzes N-acyl-phosphatidylethanolamines (NAPEs) to produce bioactive N-acylethanolamines/fatty acid ethanolamides (NAEs/FAEs) and phosphatidic acid. Cleaves the terminal phosphodiester bond of diacyl- and alkenylacyl-NAPEs, primarily playing a role in the generation of long-chain saturated and monounsaturated NAEs in the brain. May control NAPE homeostasis in dopaminergic neuron membranes and regulate neuron survival, partly through RAC1 activation. As a regulator of lipid metabolism in the adipose tissue, mediates the crosstalk between adipocytes, gut microbiota and immune cells to control body temperature and weight. In particular, regulates energy homeostasis by promoting cold-induced brown or beige adipocyte differentiation program to generate heat from fatty acids and glucose. Has limited D-type phospholipase activity toward N-acyl lyso-NAPEs. This chain is N-acyl-phosphatidylethanolamine-hydrolyzing phospholipase D (NAPEPLD), found in Pongo abelii (Sumatran orangutan).